A 330-amino-acid polypeptide reads, in one-letter code: ADP-L-glycero-D-manno-heptose-6-epimerase (330 aa).

NADP(+) is bound by residues 11–12 (FI), 32–33 (DN), lysine 39, lysine 54, 75–79 (EGACS), and asparagine 92. Tyrosine 139 acts as the Proton acceptor in catalysis. Lysine 143 is an NADP(+) binding site. Residue asparagine 168 participates in substrate binding. Residues valine 169 and lysine 177 each contribute to the NADP(+) site. The active-site Proton acceptor is lysine 177. Substrate contacts are provided by residues arginine 179, histidine 186, 200-203 (FGEY), arginine 213, and tyrosine 292.

This sequence belongs to the NAD(P)-dependent epimerase/dehydratase family. HldD subfamily. Homopentamer. NADP(+) serves as cofactor.

It catalyses the reaction ADP-D-glycero-beta-D-manno-heptose = ADP-L-glycero-beta-D-manno-heptose. It functions in the pathway nucleotide-sugar biosynthesis; ADP-L-glycero-beta-D-manno-heptose biosynthesis; ADP-L-glycero-beta-D-manno-heptose from D-glycero-beta-D-manno-heptose 7-phosphate: step 4/4. In terms of biological role, catalyzes the interconversion between ADP-D-glycero-beta-D-manno-heptose and ADP-L-glycero-beta-D-manno-heptose via an epimerization at carbon 6 of the heptose. This chain is ADP-L-glycero-D-manno-heptose-6-epimerase, found in Burkholderia ambifaria (strain ATCC BAA-244 / DSM 16087 / CCUG 44356 / LMG 19182 / AMMD) (Burkholderia cepacia (strain AMMD)).